Here is a 119-residue protein sequence, read N- to C-terminus: Large ribosomal subunit protein bL12 (119 aa).

This sequence belongs to the bacterial ribosomal protein bL12 family. In terms of assembly, homodimer. Part of the ribosomal stalk of the 50S ribosomal subunit. Forms a multimeric L10(L12)X complex, where L10 forms an elongated spine to which 2 to 4 L12 dimers bind in a sequential fashion. Binds GTP-bound translation factors.

Its function is as follows. Forms part of the ribosomal stalk which helps the ribosome interact with GTP-bound translation factors. Is thus essential for accurate translation. This Bacillus cytotoxicus (strain DSM 22905 / CIP 110041 / 391-98 / NVH 391-98) protein is Large ribosomal subunit protein bL12.